A 522-amino-acid polypeptide reads, in one-letter code: BAR/IMD domain-containing adapter protein 2-like 2 (522 aa).

The IMD domain occupies 1 to 239 (MAPEMDQFYR…HSPGLLGPAL (239 aa)). Disordered regions lie at residues 220-325 (SEAS…GGGG) and 404-502 (PMSP…GTNP). Residues S231, S272, and S303 each carry the phosphoserine modification. The span at 297 to 317 (RTPSASSLYASSTQRSRSNSF) shows a compositional bias: polar residues. Positions 324–387 (GGARRVRALV…PEAYVKPVEE (64 aa)) constitute an SH3 domain. The segment covering 443 to 456 (SQSRSRTPSRVPSR) has biased composition (low complexity). Pro residues predominate over residues 457–466 (APSPAPPPLP). Phosphoserine occurs at positions 472 and 475.

In terms of tissue distribution, expressed in the epithelial layer of the intestine and in the kidney.

It localises to the cell membrane. It is found in the cell junction. The protein resides in the cytoplasmic vesicle membrane. In terms of biological role, phosphoinositides-binding protein that induces the formation of planar or gently curved membrane structures. Binds to phosphoinositides, including to phosphatidylinositol 4,5-bisphosphate (PtdIns(4,5)P2) headgroups. There seems to be no clear preference for a specific phosphoinositide. This Mus musculus (Mouse) protein is BAR/IMD domain-containing adapter protein 2-like 2 (Baiap2l2).